A 220-amino-acid chain; its full sequence is 1-Cys peroxiredoxin B (220 aa).

The Thioredoxin domain maps to 4–165 (LTLGDVVPDL…VLRATDALLT (162 aa)). The active-site Cysteine sulfenic acid (-SOH) intermediate is C46. Positions 195–218 (KARFPAGFETAQLPSNKCYLRFTQ) match the Bipartite nuclear localization signal motif.

This sequence belongs to the peroxiredoxin family. Prx6 subfamily.

It is found in the nucleus. It localises to the cytoplasm. The catalysed reaction is a hydroperoxide + [thioredoxin]-dithiol = an alcohol + [thioredoxin]-disulfide + H2O. Its function is as follows. Thiol-specific peroxidase that catalyzes the reduction of hydrogen peroxide and organic hydroperoxides to water and alcohols, respectively. Seems to contribute to the inhibition of germination during stress. This is 1-Cys peroxiredoxin B from Oryza sativa subsp. indica (Rice).